Reading from the N-terminus, the 90-residue chain is MDGIKYAVFTDKSIQLLGKKQYTSNVESRSTRTEIKHWVELWNSYEMNSHRLPGKGRRMGPIMGHTMHYRRMIITLQSSYSIPPLRKKRT.

Residues 1–46 (MDGIKYAVFTDKSIQLLGKKQYTSNVESRSTRTEIKHWVELWNSYE) are coded by first part of gene. Residues 47–90 (MNSHRLPGKGRRMGPIMGHTMHYRRMIITLQSSYSIPPLRKKRT) form a coded by second part of gene region.

The protein belongs to the universal ribosomal protein uL23 family. In terms of assembly, part of the 50S ribosomal subunit.

Its subcellular location is the plastid. The protein localises to the chloroplast. Its function is as follows. Binds to 23S rRNA. The sequence is that of Putative large ribosomal subunit protein uL23c (rpl23) from Spinacia oleracea (Spinach).